The chain runs to 215 residues: Fibrillarin-like rRNA/tRNA 2'-O-methyltransferase (215 aa).

The segment at Met-1 to Val-29 is disordered. The segment covering Val-11–Ser-20 has biased composition (basic and acidic residues). S-adenosyl-L-methionine contacts are provided by residues Thr-76 to Thr-77, Glu-92 to Phe-93, Asp-117 to Ala-118, and Asp-138 to Thr-141.

The protein belongs to the methyltransferase superfamily. Fibrillarin family. Interacts with nop5. Component of box C/D small ribonucleoprotein (sRNP) particles that contain rpl7ae, FlpA and nop5, plus a guide RNA.

Involved in pre-rRNA and tRNA processing. Utilizes the methyl donor S-adenosyl-L-methionine to catalyze the site-specific 2'-hydroxyl methylation of ribose moieties in rRNA and tRNA. Site specificity is provided by a guide RNA that base pairs with the substrate. Methylation occurs at a characteristic distance from the sequence involved in base pairing with the guide RNA. The protein is Fibrillarin-like rRNA/tRNA 2'-O-methyltransferase of Haloquadratum walsbyi (strain DSM 16790 / HBSQ001).